The sequence spans 212 residues: Large ribosomal subunit protein uL3 (212 aa).

Gln-153 is modified (N5-methylglutamine).

This sequence belongs to the universal ribosomal protein uL3 family. In terms of assembly, part of the 50S ribosomal subunit. Forms a cluster with proteins L14 and L19. Methylated by PrmB.

In terms of biological role, one of the primary rRNA binding proteins, it binds directly near the 3'-end of the 23S rRNA, where it nucleates assembly of the 50S subunit. The protein is Large ribosomal subunit protein uL3 of Marinobacter nauticus (strain ATCC 700491 / DSM 11845 / VT8) (Marinobacter aquaeolei).